A 410-amino-acid polypeptide reads, in one-letter code: Multidrug resistance protein MdtM (410 aa).

Residues 1 to 11 (MPRFFTRHAAT) are Cytoplasmic-facing. The helical transmembrane segment at 12–32 (LFFPMALILYDFAAYLSTDLI) threads the bilayer. Over 33-48 (QPGIINVVRDFNADVS) the chain is Periplasmic. A helical transmembrane segment spans residues 49 to 69 (LAPAAVSLYLAGGMALQWLLG). The Cytoplasmic segment spans residues 70–78 (PLSDRIGRR). The chain crosses the membrane as a helical span at residues 79–99 (PVLITGALIFTLACAATMFTT). The Periplasmic portion of the chain corresponds to 100 to 103 (SMTQ). The helical transmembrane segment at 104 to 124 (FLIARAIQGTSICFIATVGYV) threads the bilayer. The Cytoplasmic segment spans residues 125-140 (TVQEAFGQTKGIKLMA). The chain crosses the membrane as a helical span at residues 141-161 (IITSIVLIAPIIGPLSGAALM). Residues 162 to 167 (HFMHWK) are Periplasmic-facing. The chain crosses the membrane as a helical span at residues 168–188 (VLFAIIAVMGFISFVGLLLAM). Residues 189–216 (PETVKRGAVPFSAKSVLRDFRNVFCNRL) lie on the Cytoplasmic side of the membrane. Residues 217–237 (FLFGAATISLSYIPMMSWVAV) traverse the membrane as a helical segment. Topologically, residues 238 to 251 (SPVILIDAGSLTTS) are periplasmic. A helical membrane pass occupies residues 252–272 (QFAWTQVPVFGAVIVANAIVA). Residues 273–282 (RFVKDPTEPR) are Cytoplasmic-facing. The helical transmembrane segment at 283–303 (FIWRAVPIQLVGLSLLIVGNL) threads the bilayer. Residues 304–307 (LSPH) lie on the Periplasmic side of the membrane. The chain crosses the membrane as a helical span at residues 308–328 (VWLWSVLGTSLYAFGIGLIFP). At 329 to 348 (TLFRFTLFSNKLPKGTVSAS) the chain is on the cytoplasmic side. A helical membrane pass occupies residues 349-369 (LNMVILMVMSVSVEIGRWLWF). Residues 370–373 (NGGR) lie on the Periplasmic side of the membrane. Residues 374-394 (LPFHLLAVVAGVIVVFTLAGL) traverse the membrane as a helical segment. Over 395–410 (LNRVRQHQAAELVEEQ) the chain is Cytoplasmic.

It belongs to the major facilitator superfamily. In terms of assembly, monomer.

Its subcellular location is the cell inner membrane. It carries out the reaction Na(+)(in) + 2 H(+)(out) = Na(+)(out) + 2 H(+)(in). It catalyses the reaction K(+)(in) + H(+)(out) = K(+)(out) + H(+)(in). Its activity is regulated as follows. Efflux is inhibited by the ionophore carbonyl cyanide 3-chlorophenylhydrazone (CCCP). Proton-dependent efflux pump. Confers resistance to a broad spectrum of chemically unrelated substrates. Overexpression confers resistance to acriflavine, chloramphenicol, norfloxacin, ethidium bromide and tetraphenylphosphonium bromide (TPP). Can also export a broad range of quaternary ammonium compounds (QACs) and contribute to the intrinsic resistance of E.coli to these antimicrobial compounds. In addition to its role in multidrug resistance, MdtM likely plays a physiological role in alkaline pH homeostasis and in resistance to bile salts. May function in alkaline pH homeostasis when millimolar concentrations of sodium or potassium are present in the growth medium. When overexpressed, can confer a tolerance to alkaline pH values up to 9.75. Probably acts as a low-affinity antiporter that catalyzes the exchange of internal Na(+) and K(+) cations for extracellular protons to maintain a stable internal pH, acid relative to outside, during exposure to alkaline environments. Can also catalyze Rb(+)/H(+) and Li(+)/H(+) antiport, but not Ca(2+)/H(+) exchange. The exact stoichiometry of antiport is unknown. Finally, it could contribute to bile salt resistance by catalyzing the transport of bile salts out of the cell cytoplasm. Mediates a bile salt/H(+) exchange driven by the electrochemical gradient. Binds to cholate and deoxycholate with micromolar affinity and catalyzes both cholate/H(+) and deoxycholate/H(+) exchange reactions. The chain is Multidrug resistance protein MdtM from Escherichia coli (strain K12).